Consider the following 632-residue polypeptide: PTS system mannitol-specific EIICBA component (632 aa).

The region spanning 12–341 (FGRFLSNMIM…ILLKYDFNTI (330 aa)) is the PTS EIIC type-2 domain. The next 6 membrane-spanning stretches (helical) occupy residues 24–45 (ISIF…WQPN), 50–70 (QLIS…TGGS), 134–155 (SLAI…PFIE), 165–185 (IQII…EPAK), 273–292 (LILG…GGLI), and 313–334 (FSNI…SILL). The PTS EIIB type-2 domain occupies 374-469 (KTIIVACDAG…KLVENMVFLY (96 aa)). Cys380 functions as the Phosphocysteine intermediate; for EIIB activity in the catalytic mechanism. Residue Cys380 is modified to Phosphocysteine; by EIIA. One can recognise a PTS EIIA type-2 domain in the interval 488 to 630 (FQLNEENIIL…KEALSLLTME (143 aa)). Catalysis depends on His548, which acts as the Tele-phosphohistidine intermediate; for EIIA activity. His548 carries the post-translational modification Phosphohistidine; by HPr.

As to quaternary structure, homodimer. In terms of processing, an intramolecular phosphotransfer takes places between His-548 and Cys-380.

Its subcellular location is the cell inner membrane. It catalyses the reaction D-mannitol(out) + N(pros)-phospho-L-histidyl-[protein] = D-mannitol 1-phosphate(in) + L-histidyl-[protein]. Its function is as follows. The phosphoenolpyruvate-dependent sugar phosphotransferase system (sugar PTS), a major carbohydrate active transport system, catalyzes the phosphorylation of incoming sugar substrates concomitantly with their translocation across the cell membrane. This system is involved in D-mannitol transport. The sequence is that of PTS system mannitol-specific EIICBA component (mtlA) from Buchnera aphidicola subsp. Acyrthosiphon pisum (strain APS) (Acyrthosiphon pisum symbiotic bacterium).